A 405-amino-acid polypeptide reads, in one-letter code: MATEQTAITRATFDEVILPVYAPADFIPVKGKGSRVWDQQGKEYIDFAGGIAVTALGHCHPALVEALKSQGETLWHTSNVFTNEPALCLGRKLIDATFAERVLFMNSGTEANETAFKLARHYACVRHSPFKTKIIAFQNAFHGRSLFTVSVGGQPKYSDGFGPKPADIIHVPFNDLHAVKAVMDDHTCAVVVEPIQGEGGVQAATPEFLKGLRDLCDKHQALLVFDEVQCGMGRTGDLFAYMHYGVTPDILTSAKALGGGFPVSAMLTTQEIASAFHVGSHGSTYGGNPLACAVAGAAFDIINTPEVLQGIHTKRQQFVQHLQAIDEQFDIFSDIRGMGLLIGAELKPKYKGRARDFLYAGAEAGVMVLNAGADVMRFAPSLVVEEADINEGMQRFAQAVGKVVA.

Pyridoxal 5'-phosphate contacts are provided by residues 108–109 (GT) and phenylalanine 141. Arginine 144 serves as a coordination point for N(2)-acetyl-L-ornithine. 226-229 (DEVQ) contacts pyridoxal 5'-phosphate. Lysine 255 bears the N6-(pyridoxal phosphate)lysine mark. Serine 283 lines the N(2)-acetyl-L-ornithine pocket. Threonine 284 contributes to the pyridoxal 5'-phosphate binding site.

The protein belongs to the class-III pyridoxal-phosphate-dependent aminotransferase family. ArgD subfamily. In terms of assembly, homodimer. Pyridoxal 5'-phosphate serves as cofactor.

The protein localises to the cytoplasm. The enzyme catalyses N(2)-acetyl-L-ornithine + 2-oxoglutarate = N-acetyl-L-glutamate 5-semialdehyde + L-glutamate. It catalyses the reaction N-succinyl-(2S,6S)-2,6-diaminopimelate + 2-oxoglutarate = (S)-2-succinylamino-6-oxoheptanedioate + L-glutamate. The protein operates within amino-acid biosynthesis; L-arginine biosynthesis; N(2)-acetyl-L-ornithine from L-glutamate: step 4/4. It functions in the pathway amino-acid biosynthesis; L-lysine biosynthesis via DAP pathway; LL-2,6-diaminopimelate from (S)-tetrahydrodipicolinate (succinylase route): step 2/3. Functionally, involved in both the arginine and lysine biosynthetic pathways. This is Acetylornithine/succinyldiaminopimelate aminotransferase from Salmonella typhi.